Here is a 447-residue protein sequence, read N- to C-terminus: N-succinylarginine dihydrolase (447 aa).

Substrate is bound by residues 19 to 28, asparagine 110, and 137 to 138; these read AGLSFGNEAS and HR. The active site involves glutamate 174. Arginine 212 lines the substrate pocket. Histidine 248 is a catalytic residue. 2 residues coordinate substrate: aspartate 250 and asparagine 359. Cysteine 365 (nucleophile) is an active-site residue.

This sequence belongs to the succinylarginine dihydrolase family. As to quaternary structure, homodimer.

It carries out the reaction N(2)-succinyl-L-arginine + 2 H2O + 2 H(+) = N(2)-succinyl-L-ornithine + 2 NH4(+) + CO2. Its pathway is amino-acid degradation; L-arginine degradation via AST pathway; L-glutamate and succinate from L-arginine: step 2/5. In terms of biological role, catalyzes the hydrolysis of N(2)-succinylarginine into N(2)-succinylornithine, ammonia and CO(2). This Salmonella typhi protein is N-succinylarginine dihydrolase.